The following is a 176-amino-acid chain: Ribose 1,5-bisphosphate phosphokinase PhnN (176 aa).

10–17 contacts ATP; that stretch reads GPSGAGKD.

The protein belongs to the ribose 1,5-bisphosphokinase family.

The enzyme catalyses alpha-D-ribose 1,5-bisphosphate + ATP = 5-phospho-alpha-D-ribose 1-diphosphate + ADP. Its pathway is metabolic intermediate biosynthesis; 5-phospho-alpha-D-ribose 1-diphosphate biosynthesis; 5-phospho-alpha-D-ribose 1-diphosphate from D-ribose 5-phosphate (route II): step 3/3. Functionally, catalyzes the phosphorylation of ribose 1,5-bisphosphate to 5-phospho-D-ribosyl alpha-1-diphosphate (PRPP). The sequence is that of Ribose 1,5-bisphosphate phosphokinase PhnN from Methylobacterium radiotolerans (strain ATCC 27329 / DSM 1819 / JCM 2831 / NBRC 15690 / NCIMB 10815 / 0-1).